The following is a 539-amino-acid chain: Glucose-6-phosphate isomerase (539 aa).

The active-site Proton donor is E353. Residues H384 and K505 contribute to the active site.

It belongs to the GPI family.

It localises to the cytoplasm. The catalysed reaction is alpha-D-glucose 6-phosphate = beta-D-fructose 6-phosphate. It participates in carbohydrate biosynthesis; gluconeogenesis. The protein operates within carbohydrate degradation; glycolysis; D-glyceraldehyde 3-phosphate and glycerone phosphate from D-glucose: step 2/4. In terms of biological role, catalyzes the reversible isomerization of glucose-6-phosphate to fructose-6-phosphate. The chain is Glucose-6-phosphate isomerase from Ralstonia nicotianae (strain ATCC BAA-1114 / GMI1000) (Ralstonia solanacearum).